The following is a 485-amino-acid chain: REST corepressor 1 (485 aa).

Disordered stretches follow at residues 1–26 and 49–110; these read MPAM…ASAS and AAAS…VGPQ. Low complexity-rich tracts occupy residues 49 to 64 and 74 to 95; these read AAAS…AAAA and AAAA…SGSS. An interaction with HDAC1 region spans residues 78–257; sequence PNGNSSSNSW…RHARKQKRER (180 aa). In terms of domain architecture, ELM2 spans 103–189; sequence GGMRVGPQYQ…KSLADLPNFT (87 aa). Lysine 122 is covalently cross-linked (Glycyl lysine isopeptide (Lys-Gly) (interchain with G-Cter in SUMO2)). Serine 127 carries the post-translational modification Phosphoserine. Residues 190 to 241 form the SANT 1 domain; sequence PFPDEWTVEDKVLFEQAFSFHGKTFHRIQQMLPDKSIASLVKFYYSWKKTRT. The stretch at 244-273 forms a coiled coil; that stretch reads SVMDRHARKQKREREESEDELEEANGNNPI. A disordered region spans residues 244–314; the sequence is SVMDRHARKQ…AKNRAKRKPP (71 aa). Serine 260 is subject to Phosphoserine. Basic and acidic residues predominate over residues 278-288; the sequence is DQNKESKKEVP. The segment at 296–384 is interaction with KDM1A; the sequence is VKKEKHSTQA…LPEVIQKCNA (89 aa). A Glycyl lysine isopeptide (Lys-Gly) (interchain with G-Cter in SUMO2) cross-link involves residue lysine 297. Residues 334 to 369 are a coiled coil; that stretch reads ATTVLRQLDMELVSVKRQIQNIKQTNSALKEKLDGG. The SANT 2 domain occupies 381 to 432; that stretch reads KCNARWTTEEQLLAVQAIRKYGRDFQAISDVIGNKSVVQVKNFFVNYRRRFN. The disordered stretch occupies residues 442–485; that stretch reads AEHGKEETNGPSNQKPVKSPDNSIKMPEEEDEAPVLDVRYASAS. Positions 450-463 are enriched in polar residues; that stretch reads NGPSNQKPVKSPDN. A Phosphoserine modification is found at serine 460. Residue lysine 466 forms a Glycyl lysine isopeptide (Lys-Gly) (interchain with G-Cter in SUMO2) linkage.

It belongs to the CoREST family. In terms of assembly, interacts directly with GFI1 and GFI1B in a RCOR/GFI/KDM1A/HDAC complex. Interacts with INMS1. Component of a BHC histone deacetylase complex that contains HDAC1, HDAC2, HMG20B/BRAF35, KDM1A, RCOR1/CoREST and PHF21A/BHC80. The BHC complex may also contain ZMYM2, ZNF217, ZMYM3, GSE1 and GTF2I. Interacts with REST. Interacts with the SMARCE1/BAF57, suggesting that the BHC complex may recruit the ATP-dependent chromatin-remodeling SWI-SNF complex. Interacts with SOX2. (Microbial infection) Interacts with herpes virus HSV-1 ICP0 protein; the interaction leads to the disruption of the BHC complex, thereby preventing the BHC complex from repressing transcription of viral genes. In terms of processing, phosphorylated by HSV-1 protein kinases in case of infection. Ubiquitously expressed.

It is found in the nucleus. Its function is as follows. Essential component of the BHC complex, a corepressor complex that represses transcription of neuron-specific genes in non-neuronal cells. The BHC complex is recruited at RE1/NRSE sites by REST and acts by deacetylating and demethylating specific sites on histones, thereby acting as a chromatin modifier. In the BHC complex, it serves as a molecular beacon for the recruitment of molecular machinery, including MeCP2 and SUV39H1, that imposes silencing across a chromosomal interval. Plays a central role in demethylation of Lys-4 of histone H3 by promoting demethylase activity of KDM1A on core histones and nucleosomal substrates. It also protects KDM1A from the proteasome. Component of a RCOR/GFI/KDM1A/HDAC complex that suppresses, via histone deacetylase (HDAC) recruitment, a number of genes implicated in multilineage blood cell development and controls hematopoietic differentiation. This is REST corepressor 1 (RCOR1) from Homo sapiens (Human).